Here is a 373-residue protein sequence, read N- to C-terminus: 2-oxoglutarate oxidoreductase subunit KorB (373 aa).

The tract at residues 26–50 (TPSLTKNAGVPTTDQPQKGKDFTSD) is disordered. Residues 27-41 (PSLTKNAGVPTTDQP) show a composition bias toward polar residues.

KG oxidoreductase (KOR) is composed of KorA and KorB subunits. Requires Mg(2+) as cofactor.

The catalysed reaction is 2 oxidized [2Fe-2S]-[ferredoxin] + 2-oxoglutarate + CoA = succinyl-CoA + 2 reduced [2Fe-2S]-[ferredoxin] + CO2 + H(+). It functions in the pathway carbohydrate metabolism; tricarboxylic acid cycle. Functionally, component of KG oxidoreductase (KOR) that catalyzes the CoA-dependent oxidative decarboxylation of 2-oxoglutarate (alpha-ketoglutarate, KG) to succinyl-CoA. Methyl viologen can act as electron acceptor in vitro; the physiologic electron acceptor is unknown. Is involved in the alternative TCA pathway that functions concurrently with fatty acid beta-oxidation. Since a growing body of evidence indicates that lipids (for example cholesterol and fatty acids) are a predominant growth substrate for M.tuberculosis during infection, flux through KOR likely represents an important step in intermediary metabolism in vivo. KOR-dependent decarboxylation of KG also appears to be an important source of CO(2) in M.tuberculosis metabolism. In Mycobacterium tuberculosis (strain ATCC 25618 / H37Rv), this protein is 2-oxoglutarate oxidoreductase subunit KorB (korB).